A 262-amino-acid chain; its full sequence is Small ribosomal subunit protein eS4A (262 aa).

In terms of domain architecture, S4 RNA-binding spans 42–105 (LPLIVFLRNR…GEHFRLVYDI (64 aa)).

Belongs to the eukaryotic ribosomal protein eS4 family. In terms of assembly, component of the small ribosomal subunit (SSU). Mature yeast ribosomes consist of a small (40S) and a large (60S) subunit. The 40S small subunit contains 1 molecule of ribosomal RNA (18S rRNA) and at least 33 different proteins. The large 60S subunit contains 3 rRNA molecules (25S, 5.8S and 5S rRNA) and at least 46 different proteins.

Its subcellular location is the cytoplasm. Component of the ribosome, a large ribonucleoprotein complex responsible for the synthesis of proteins in the cell. The small ribosomal subunit (SSU) binds messenger RNAs (mRNAs) and translates the encoded message by selecting cognate aminoacyl-transfer RNA (tRNA) molecules. The large subunit (LSU) contains the ribosomal catalytic site termed the peptidyl transferase center (PTC), which catalyzes the formation of peptide bonds, thereby polymerizing the amino acids delivered by tRNAs into a polypeptide chain. The nascent polypeptides leave the ribosome through a tunnel in the LSU and interact with protein factors that function in enzymatic processing, targeting, and the membrane insertion of nascent chains at the exit of the ribosomal tunnel. This is Small ribosomal subunit protein eS4A (rps401) from Schizosaccharomyces pombe (strain 972 / ATCC 24843) (Fission yeast).